The following is a 146-amino-acid chain: Cytochrome c oxidase subunit 5A, mitochondrial (146 aa).

The N-terminal 37 residues, 1-37 (MLAAALRRCTAAAAARGLLHPASAPSPAAAVCSIRCY), are a transit peptide targeting the mitochondrion. The SIFI-degron signature appears at 2-16 (LAAALRRCTAAAAAR). An N6-acetyllysine mark is found at lysine 83 and lysine 109. At threonine 137 the chain carries Phosphothreonine.

It belongs to the cytochrome c oxidase subunit 5A family. In terms of assembly, component of the cytochrome c oxidase (complex IV, CIV), a multisubunit enzyme composed of 14 subunits. The complex is composed of a catalytic core of 3 subunits MT-CO1, MT-CO2 and MT-CO3, encoded in the mitochondrial DNA, and 11 supernumerary subunits COX4I, COX5A, COX5B, COX6A, COX6B, COX6C, COX7A, COX7B, COX7C, COX8 and NDUFA4, which are encoded in the nuclear genome. The complex exists as a monomer or a dimer and forms supercomplexes (SCs) in the inner mitochondrial membrane with NADH-ubiquinone oxidoreductase (complex I, CI) and ubiquinol-cytochrome c oxidoreductase (cytochrome b-c1 complex, complex III, CIII), resulting in different assemblies (supercomplex SCI(1)III(2)IV(1) and megacomplex MCI(2)III(2)IV(2)). Interacts with AFG1L. Interacts with RAB5IF. In response to mitochondrial stress, the precursor protein is ubiquitinated by the SIFI complex in the cytoplasm before mitochondrial import, leading to its degradation. Within the SIFI complex, UBR4 initiates ubiquitin chain that are further elongated or branched by KCMF1.

The protein resides in the mitochondrion inner membrane. It functions in the pathway energy metabolism; oxidative phosphorylation. In terms of biological role, component of the cytochrome c oxidase, the last enzyme in the mitochondrial electron transport chain which drives oxidative phosphorylation. The respiratory chain contains 3 multisubunit complexes succinate dehydrogenase (complex II, CII), ubiquinol-cytochrome c oxidoreductase (cytochrome b-c1 complex, complex III, CIII) and cytochrome c oxidase (complex IV, CIV), that cooperate to transfer electrons derived from NADH and succinate to molecular oxygen, creating an electrochemical gradient over the inner membrane that drives transmembrane transport and the ATP synthase. Cytochrome c oxidase is the component of the respiratory chain that catalyzes the reduction of oxygen to water. Electrons originating from reduced cytochrome c in the intermembrane space (IMS) are transferred via the dinuclear copper A center (CU(A)) of subunit 2 and heme A of subunit 1 to the active site in subunit 1, a binuclear center (BNC) formed by heme A3 and copper B (CU(B)). The BNC reduces molecular oxygen to 2 water molecules using 4 electrons from cytochrome c in the IMS and 4 protons from the mitochondrial matrix. The protein is Cytochrome c oxidase subunit 5A, mitochondrial (Cox5a) of Mus musculus (Mouse).